The chain runs to 425 residues: Histone-binding protein RBBP7 (425 aa).

7 WD repeats span residues 47-122 (QWLP…KINH), 128-173 (RARY…LRLR), 181-217 (GLSW…KVVD), 228-269 (VVED…HSVD), 275-312 (VNCL…LHSF), 318-369 (EIFQ…LFIH), and 376-403 (ISDF…IWQM).

This sequence belongs to the WD repeat RBAP46/RBAP48/MSI1 family. Binds directly to helix 1 of the histone fold of histone H4, a region that is not accessible when H4 is in chromatin.

Its subcellular location is the nucleus. Functionally, core histone-binding subunit that may target chromatin remodeling factors, histone acetyltransferases and histone deacetylases to their histone substrates in a manner that is regulated by nucleosomal DNA. Component of several complexes which regulate chromatin metabolism. In Xenopus laevis (African clawed frog), this protein is Histone-binding protein RBBP7 (rbbp7).